Reading from the N-terminus, the 538-residue chain is Bifunctional purine biosynthesis protein PurH (538 aa).

Residues 8 to 158 (IPAPDKVEIK…KNHAYVTILT (151 aa)) enclose the MGS-like domain.

This sequence belongs to the PurH family.

The catalysed reaction is (6R)-10-formyltetrahydrofolate + 5-amino-1-(5-phospho-beta-D-ribosyl)imidazole-4-carboxamide = 5-formamido-1-(5-phospho-D-ribosyl)imidazole-4-carboxamide + (6S)-5,6,7,8-tetrahydrofolate. The enzyme catalyses IMP + H2O = 5-formamido-1-(5-phospho-D-ribosyl)imidazole-4-carboxamide. It functions in the pathway purine metabolism; IMP biosynthesis via de novo pathway; 5-formamido-1-(5-phospho-D-ribosyl)imidazole-4-carboxamide from 5-amino-1-(5-phospho-D-ribosyl)imidazole-4-carboxamide (10-formyl THF route): step 1/1. Its pathway is purine metabolism; IMP biosynthesis via de novo pathway; IMP from 5-formamido-1-(5-phospho-D-ribosyl)imidazole-4-carboxamide: step 1/1. The sequence is that of Bifunctional purine biosynthesis protein PurH from Rhizobium etli (strain CIAT 652).